A 749-amino-acid chain; its full sequence is Phototropin (749 aa).

Residues 7 to 80 (PASQLTKVLA…QKIRDAIKKG (74 aa)) enclose the PAS 1 domain. FMN-binding positions include 56–61 (NCRFLQ), arginine 74, asparagine 89, asparagine 99, and glutamine 120. An S-4a-FMN cysteine modification is found at cysteine 57. One can recognise a PAC 1 domain in the interval 81–135 (EACSVRLLNYRKDGTPFWNLLTVTPIKTPDGRVSKFVGVQVDVTSKTEGKALADN). One can recognise a PAS 2 domain in the interval 200-273 (VALDLATTVE…DQIRAAIKEG (74 aa)). One can recognise a PAC 2 domain in the interval 274–328 (SELTVRILNYTKAGKAFWNMFTLAPMRDQDGHARFFVGVQVDVTAQSTSPDKAPV). The Protein kinase domain occupies 404–712 (FRRVKQLGAG…ANEIKSHPWF (309 aa)). Residues 410–418 (LGAGDVGLV) and lysine 433 contribute to the ATP site. Catalysis depends on aspartate 529, which acts as the Proton acceptor. Disordered regions lie at residues 563 to 591 (KIGG…SSSG) and 729 to 749 (PRRA…FDNY). An AGC-kinase C-terminal domain is found at 713 to 749 (KGINWALLRHQQPPYVPRRASKAAGGSSTGGAAFDNY). Over residues 734–749 (KAAGGSSTGGAAFDNY) the composition is skewed to low complexity.

It belongs to the protein kinase superfamily. AGC Ser/Thr protein kinase family. It depends on FMN as a cofactor. Post-translationally, autophosphorylated in response to blue light irradiation. 2 molecules of FMN bind covalently to cysteines after exposure to blue light and are reversed in the dark. As to expression, expressed in gametes, pre-gametes and gametes generated by pre-gametes (at protein level).

It localises to the membrane. The enzyme catalyses L-seryl-[protein] + ATP = O-phospho-L-seryl-[protein] + ADP + H(+). It carries out the reaction L-threonyl-[protein] + ATP = O-phospho-L-threonyl-[protein] + ADP + H(+). Protein kinase that acts as a blue light photoreceptor. Required for non-photochemical quenching (NPQ), a mechanism that converts and dissipates the harmful excess absorbed light energy into heat and protect the photosynthetic apparatus from photo-oxidative damage. Controls the energy-dependent chlorophyll fluorescence quenching (qE) activity of chlorophyll excited states by inducing the expression of the qE effector protein LHCSR3 in high light intensities. This Chlamydomonas reinhardtii (Chlamydomonas smithii) protein is Phototropin.